The chain runs to 815 residues: Translation initiation factor IF-2 (815 aa).

Residues 153–176 (VQEKEAEKKVEKLKTADKPKEGNK) are compositionally biased toward basic and acidic residues. A disordered region spans residues 153–219 (VQEKEAEKKV…THLSQKIQAE (67 aa)). Over residues 191-209 (KQLHVARHNPNRRLKKKDR) the composition is skewed to basic residues. Positions 315–482 (ARPPIVTIMG…AISLTAEILE (168 aa)) constitute a tr-type G domain. Positions 324–331 (GHVDHGKT) are G1. Position 324 to 331 (324 to 331 (GHVDHGKT)) interacts with GTP. A G2 region spans residues 349–353 (GITQH). Residues 370-373 (DTPG) form a G3 region. GTP is bound by residues 370–374 (DTPGH) and 424–427 (NKID). The interval 424 to 427 (NKID) is G4. The G5 stretch occupies residues 460–462 (SAH).

It belongs to the TRAFAC class translation factor GTPase superfamily. Classic translation factor GTPase family. IF-2 subfamily.

It is found in the cytoplasm. One of the essential components for the initiation of protein synthesis. Protects formylmethionyl-tRNA from spontaneous hydrolysis and promotes its binding to the 30S ribosomal subunits. Also involved in the hydrolysis of GTP during the formation of the 70S ribosomal complex. The chain is Translation initiation factor IF-2 from Vesicomyosocius okutanii subsp. Calyptogena okutanii (strain HA).